Reading from the N-terminus, the 120-residue chain is Large ribosomal subunit protein bL17 (120 aa).

It belongs to the bacterial ribosomal protein bL17 family. As to quaternary structure, part of the 50S ribosomal subunit. Contacts protein L32.

The polypeptide is Large ribosomal subunit protein bL17 (Shouchella clausii (strain KSM-K16) (Alkalihalobacillus clausii)).